A 207-amino-acid polypeptide reads, in one-letter code: Small ribosomal subunit protein uS4 (207 aa).

Positions Cys32–Gln55 are disordered. The segment covering Gly42–Gly53 has biased composition (polar residues). The S4 RNA-binding domain maps to Ser97–Glu158.

It belongs to the universal ribosomal protein uS4 family. In terms of assembly, part of the 30S ribosomal subunit. Contacts protein S5. The interaction surface between S4 and S5 is involved in control of translational fidelity.

Its function is as follows. One of the primary rRNA binding proteins, it binds directly to 16S rRNA where it nucleates assembly of the body of the 30S subunit. With S5 and S12 plays an important role in translational accuracy. The polypeptide is Small ribosomal subunit protein uS4 (Paraburkholderia phytofirmans (strain DSM 17436 / LMG 22146 / PsJN) (Burkholderia phytofirmans)).